The primary structure comprises 808 residues: Protein Ac66 (808 aa).

The segment covering 132–141 has biased composition (pro residues); sequence PFSTPPPTQP. Positions 132–151 are disordered; sequence PFSTPPPTQPPESNVAGVGG.

As to quaternary structure, interacts with the putative E3 ligase IE0 and with viral ubiquitin/vUbi.

Its subcellular location is the host nucleus. The protein resides in the host cytoplasm. In terms of biological role, plays an essential role in the efficient egress of nucleocapsids from the host nucleus to the cytoplasm. In Lepidoptera (butterflies and moths), this protein is Protein Ac66 (Ac66).